The following is a 142-amino-acid chain: Trafficking protein particle complex subunit 1 (142 aa).

The protein belongs to the TRAPP small subunits family. BET5 subfamily. Part of the multisubunit TRAPP (transport protein particle) complex.

It is found in the golgi apparatus. The protein resides in the cis-Golgi network. The protein localises to the endoplasmic reticulum. Functionally, may play a role in vesicular transport from endoplasmic reticulum to Golgi. In Dictyostelium discoideum (Social amoeba), this protein is Trafficking protein particle complex subunit 1 (trappc1-1).